Reading from the N-terminus, the 399-residue chain is Glycosyltransferase BC10 (399 aa).

Over 1 to 17 the chain is Cytoplasmic; it reads MKPPRRWMYGRGGGKGK. A helical; Signal-anchor for type II membrane protein transmembrane segment spans residues 18–38; sequence PAGLLLLGVFLCLSVVLLLLL. The Lumenal portion of the chain corresponds to 39 to 399; it reads HGSSPSLEGE…LIAANGASTM (361 aa). N-linked (GlcNAc...) asparagine glycosylation is found at Asn-142 and Asn-188.

The protein belongs to the glycosyltransferase 14 family. In terms of tissue distribution, expressed in roots, culms, leaves and panicles. Expressed in vascular bundles of leaf sheaths and stems where sclerenchyma cells are developing. Expressed in mechanical tissues of young organs, such as young leaf sheaths, stems and tiller buds.

The protein resides in the membrane. Glycosyltransferase required for the regulation of cellulose biosynthesis in the cell wall. Required for the biosynthesis of hexoses (glucose, mannose and galactose) in both cellulosic and non-cellulosic (pectins and hemicelluloses) components of cell walls. Required for the formation of arabinogalactan proteins which contribute to the strengthening of cell walls. Possesses low glycosyltransferase activity. This is Glycosyltransferase BC10 from Oryza sativa subsp. japonica (Rice).